The primary structure comprises 121 residues: MNLIQTLEQEEISRLNKTIPAYAPGDTVIVSVNVVEGTRKRVQAFEGVVIAKRNRGLNSSFIVRKVSNGEGVERTFQVYSPLIAKIEVKRRGDVRRAKLYYLRSRSGKSARIKEKLGAKAA.

This sequence belongs to the bacterial ribosomal protein bL19 family.

Functionally, this protein is located at the 30S-50S ribosomal subunit interface and may play a role in the structure and function of the aminoacyl-tRNA binding site. The polypeptide is Large ribosomal subunit protein bL19 (Polaromonas sp. (strain JS666 / ATCC BAA-500)).